Reading from the N-terminus, the 167-residue chain is Leptin (167 aa).

A signal peptide spans 1-21; sequence MCWRPLCRFLWLWSYLSYVQA. C117 and C167 are joined by a disulfide.

The protein belongs to the leptin family.

The protein resides in the secreted. Key player in the regulation of energy balance and body weight control. Once released into the circulation, has central and peripheral effects by binding LEPR, found in many tissues, which results in the activation of several major signaling pathways. In the hypothalamus, acts as an appetite-regulating factor that induces a decrease in food intake and an increase in energy consumption by inducing anorexinogenic factors and suppressing orexigenic neuropeptides, also regulates bone mass and secretion of hypothalamo-pituitary-adrenal hormones. In the periphery, increases basal metabolism, influences reproductive function, regulates pancreatic beta-cell function and insulin secretion, is pro-angiogenic for endothelial cell and affects innate and adaptive immunity. In the arcuate nucleus of the hypothalamus, activates by depolarization POMC neurons inducing FOS and SOCS3 expression to release anorexigenic peptides and inhibits by hyperpolarization NPY neurons inducing SOCS3 with a consequent reduction on release of orexigenic peptides. In addition to its known satiety inducing effect, has a modulatory role in nutrient absorption. In the intestine, reduces glucose absorption by enterocytes by activating PKC and leading to a sequential activation of p38, PI3K and ERK signaling pathways which exerts an inhibitory effect on glucose absorption. Acts as a growth factor on certain tissues, through the activation of different signaling pathways increases expression of genes involved in cell cycle regulation such as CCND1, via JAK2-STAT3 pathway, or VEGFA, via MAPK1/3 and PI3K-AKT1 pathways. May also play an apoptotic role via JAK2-STAT3 pathway and up-regulation of BIRC5 expression. Pro-angiogenic, has mitogenic activity on vascular endothelial cells and plays a role in matrix remodeling by regulating the expression of matrix metalloproteinases (MMPs) and tissue inhibitors of metalloproteinases (TIMPs). In innate immunity, modulates the activity and function of neutrophils by increasing chemotaxis and the secretion of oxygen radicals. Increases phagocytosis by macrophages and enhances secretion of pro-inflammatory mediators. Increases cytotoxic ability of NK cells. Plays a pro-inflammatory role, in synergy with IL1B, by inducing NOS2 which promotes the production of IL6, IL8 and Prostaglandin E2, through a signaling pathway that involves JAK2, PI3K, MAP2K1/MEK1 and MAPK14/p38. In adaptive immunity, promotes the switch of memory T-cells towards T helper-1 cell immune responses. Increases CD4(+)CD25(-) T cells proliferation and reduces autophagy during TCR (T cell receptor) stimulation, through MTOR signaling pathway activation and BCL2 up-regulation. The polypeptide is Leptin (Lep) (Mus musculus (Mouse)).